The sequence spans 340 residues: UDP-3-O-(3-hydroxymyristoyl)glucosamine N-acyltransferase (340 aa).

His239 acts as the Proton acceptor in catalysis.

It belongs to the transferase hexapeptide repeat family. LpxD subfamily. As to quaternary structure, homotrimer.

The enzyme catalyses a UDP-3-O-[(3R)-3-hydroxyacyl]-alpha-D-glucosamine + a (3R)-hydroxyacyl-[ACP] = a UDP-2-N,3-O-bis[(3R)-3-hydroxyacyl]-alpha-D-glucosamine + holo-[ACP] + H(+). It catalyses the reaction UDP-3-O-[(3R)-3-hydroxytetradecanoyl]-alpha-D-glucosamine + (3R)-hydroxytetradecanoyl-[ACP] = UDP-2-N,3-O-bis[(3R)-3-hydroxytetradecanoyl]-alpha-D-glucosamine + holo-[ACP] + H(+). It participates in glycolipid biosynthesis; lipid IV(A) biosynthesis; lipid IV(A) from (3R)-3-hydroxytetradecanoyl-[acyl-carrier-protein] and UDP-N-acetyl-alpha-D-glucosamine: step 3/6. Catalyzes the N-acylation of UDP-3-O-(hydroxytetradecanoyl)glucosamine using 3-hydroxytetradecanoyl-ACP as the acyl donor. Is involved in the biosynthesis of lipid A, a phosphorylated glycolipid that anchors the lipopolysaccharide to the outer membrane of the cell. This Yersinia pestis bv. Antiqua (strain Antiqua) protein is UDP-3-O-(3-hydroxymyristoyl)glucosamine N-acyltransferase.